The sequence spans 75 residues: MARQLFKRKKFCRFTAEGIKEIDYKSVDLLKDFIAENGKIIPARITGTKARYQRQLTTAIKRARFLAFLPYTDQH.

Belongs to the bacterial ribosomal protein bS18 family. In terms of assembly, part of the 30S ribosomal subunit. Forms a tight heterodimer with protein bS6.

In terms of biological role, binds as a heterodimer with protein bS6 to the central domain of the 16S rRNA, where it helps stabilize the platform of the 30S subunit. This is Small ribosomal subunit protein bS18 from Chromobacterium violaceum (strain ATCC 12472 / DSM 30191 / JCM 1249 / CCUG 213 / NBRC 12614 / NCIMB 9131 / NCTC 9757 / MK).